We begin with the raw amino-acid sequence, 1245 residues long: Pesticidal crystal protein Cry5Ba (1245 aa).

The tract at residues Pro1219–Gln1245 is disordered. Over residues Thr1222 to Gln1245 the composition is skewed to low complexity.

Belongs to the delta endotoxin family.

Promotes colloidosmotic lysis by binding to the midgut epithelial cells of hymenopteran species. The polypeptide is Pesticidal crystal protein Cry5Ba (cry5Ba) (Bacillus thuringiensis).